Reading from the N-terminus, the 442-residue chain is F-box/FBD/LRR-repeat protein At2g26030 (442 aa).

One can recognise an F-box domain in the interval 3 to 49 (CDRICELPDSLLTQVLSYLPTIDSVKTSVLSKRWEFLWLRVPVLDLK). LRR repeat units lie at residues 128–160 (CNTL…HLED), 162–187 (WYYD…VLIR), 188–214 (PIDF…RLTF), 234–260 (YLNF…DIDS), 278–309 (KRDI…DRYS), and 324–352 (QAAV…ILDF). In terms of domain architecture, FBD spans 358-410 (PEQDGLTYVPQCLLSSLECVEIRELIMGEETGEKLVRYFLKNSVVLKKLILRL).

The polypeptide is F-box/FBD/LRR-repeat protein At2g26030 (Arabidopsis thaliana (Mouse-ear cress)).